We begin with the raw amino-acid sequence, 58 residues long: Large ribosomal subunit protein bL32 (58 aa).

It belongs to the bacterial ribosomal protein bL32 family.

This is Large ribosomal subunit protein bL32 from Caldicellulosiruptor saccharolyticus (strain ATCC 43494 / DSM 8903 / Tp8T 6331).